A 38-amino-acid polypeptide reads, in one-letter code: Trypsin inhibitor 2 (38 aa).

The residue at position 1 (Gln-1) is a Pyrrolidone carboxylic acid.

Contains disulfide bonds.

In terms of biological role, inhibits trypsin-like proteases from the guts of the insect pests P.truncatus, P.americana, Acheta sp and Gryllus sp. The polypeptide is Trypsin inhibitor 2 (Opuntia streptacantha (Prickly pear cactus)).